The following is a 440-amino-acid chain: Asparagine--tRNA ligase (440 aa).

It belongs to the class-II aminoacyl-tRNA synthetase family. As to quaternary structure, homodimer.

The protein localises to the cytoplasm. It catalyses the reaction tRNA(Asn) + L-asparagine + ATP = L-asparaginyl-tRNA(Asn) + AMP + diphosphate + H(+). This Chloroflexus aurantiacus (strain ATCC 29364 / DSM 637 / Y-400-fl) protein is Asparagine--tRNA ligase.